Reading from the N-terminus, the 116-residue chain is NADH-ubiquinone oxidoreductase chain 3 (116 aa).

The next 3 membrane-spanning stretches (helical) occupy residues 6–26 (FMLL…FWLA), 56–76 (FFLV…LLPL), and 85–105 (PLLT…GLVY).

The protein belongs to the complex I subunit 3 family.

Its subcellular location is the mitochondrion membrane. The catalysed reaction is a ubiquinone + NADH + 5 H(+)(in) = a ubiquinol + NAD(+) + 4 H(+)(out). Functionally, core subunit of the mitochondrial membrane respiratory chain NADH dehydrogenase (Complex I) that is believed to belong to the minimal assembly required for catalysis. Complex I functions in the transfer of electrons from NADH to the respiratory chain. The immediate electron acceptor for the enzyme is believed to be ubiquinone. This Struthio camelus (Common ostrich) protein is NADH-ubiquinone oxidoreductase chain 3 (MT-ND3).